The sequence spans 291 residues: Protease HtpX homolog (291 aa).

The next 2 helical transmembrane spans lie at 4–24 and 39–59; these read ILLF…VASL and GSLL…SLLI. Residue histidine 144 participates in Zn(2+) binding. Residue glutamate 145 is part of the active site. A Zn(2+)-binding site is contributed by histidine 148. 2 consecutive transmembrane segments (helical) span residues 159–179 and 199–219; these read LIQG…AFAI and ITTV…VAWF. Glutamate 224 contacts Zn(2+).

The protein belongs to the peptidase M48B family. Requires Zn(2+) as cofactor.

Its subcellular location is the cell inner membrane. The chain is Protease HtpX homolog from Albidiferax ferrireducens (strain ATCC BAA-621 / DSM 15236 / T118) (Rhodoferax ferrireducens).